The chain runs to 287 residues: mRNA-capping enzyme regulatory subunit OPG124 (287 aa).

This sequence belongs to the orthopoxvirus mRNA-capping enzyme regulatory subunit family. As to quaternary structure, interacts with the catalytic subunit OPG113.

Its subcellular location is the virion. Functionally, regulatory subunit of the mRNA cap enzyme which stabilizes the catalytic subunit and enhances its methyltransferase activity through an allosteric mechanism. Heterodimeric mRNA capping enzyme catalyzes the linkage of a N7-methyl-guanosine moiety to the first transcribed nucleotide (cap 0 structure), whereas the methyltransferase OPG102 is responsible for a second methylation at the 2'-O position of the ribose (cap 1 structure). Also involved in early viral gene transcription termination and intermediate viral gene transcription initiation. Early gene transcription termination requires the termination factor VTF, the DNA-dependent ATPase NPH-I/OPG123 and the RAP94/OPG109 subunit of the viral RNA polymerase, as well as the presence of a specific termination motif. Binds, together with RAP94/OPG109, to the termination motif 5'-UUUUUNU-3' in the nascent early mRNA. The protein is mRNA-capping enzyme regulatory subunit OPG124 (OPG124) of Bos taurus (Bovine).